A 468-amino-acid chain; its full sequence is 6-phospho-beta-galactosidase (468 aa).

The D-galactose 6-phosphate site is built by Q19, H116, N159, E160, and N297. E160 functions as the Proton donor in the catalytic mechanism. E375 acts as the Nucleophile in catalysis. Positions 428, 429, 435, and 437 each coordinate D-galactose 6-phosphate.

It belongs to the glycosyl hydrolase 1 family.

It carries out the reaction a 6-phospho-beta-D-galactoside + H2O = D-galactose 6-phosphate + an alcohol. It functions in the pathway carbohydrate metabolism; lactose degradation; D-galactose 6-phosphate and beta-D-glucose from lactose 6-phosphate: step 1/1. In Streptococcus pyogenes serotype M6 (strain ATCC BAA-946 / MGAS10394), this protein is 6-phospho-beta-galactosidase.